A 120-amino-acid chain; its full sequence is uncharacterized protein (120 aa).

An HIT domain is found at 7-120; it reads VFAKIITKNL…KLIGLINNND (114 aa). The Histidine triad motif motif lies at 101–105; the sequence is HFHFH.

This is an uncharacterized protein from Rickettsia prowazekii (strain Madrid E).